Consider the following 490-residue polypeptide: Cobyric acid synthase (490 aa).

The region spanning 252–428 (ARRVAVVRLP…WHGAFEGDAL (177 aa)) is the GATase cobBQ-type domain. Cys333 (nucleophile) is an active-site residue. Residue His420 is part of the active site.

The protein belongs to the CobB/CobQ family. CobQ subfamily.

It functions in the pathway cofactor biosynthesis; adenosylcobalamin biosynthesis. Functionally, catalyzes amidations at positions B, D, E, and G on adenosylcobyrinic A,C-diamide. NH(2) groups are provided by glutamine, and one molecule of ATP is hydrogenolyzed for each amidation. In Mycolicibacterium vanbaalenii (strain DSM 7251 / JCM 13017 / BCRC 16820 / KCTC 9966 / NRRL B-24157 / PYR-1) (Mycobacterium vanbaalenii), this protein is Cobyric acid synthase.